The sequence spans 394 residues: Nuclear pore glycoprotein p62 (394 aa).

A run of 5 repeats spans residues 22-23 (FG), 50-51 (FG), 75-76 (FG), 77-78 (FG), and 116-117 (FG). The 5 X 2 AA repeats of F-G stretch occupies residues 22 to 117 (FGLSTGTPAA…GTSAAPPAFG (96 aa)). The span at 45–57 (KTTFSFGTPAPTA) shows a compositional bias: low complexity. Residues 45–73 (KTTFSFGTPAPTAGIGGGDADNSKAQAPP) are disordered. A coiled-coil region spans residues 211–341 (SYHQLEEHIN…DNLNEANKGQ (131 aa)).

This sequence belongs to the nucleoporin NSP1/NUP62 family. As to expression, expressed in adult male accessory glands (at protein level).

Its subcellular location is the nucleus. The protein resides in the chromosome. The protein localises to the nucleus envelope. It is found in the nuclear pore complex. It localises to the cytoplasm. Its subcellular location is the cytoskeleton. The protein resides in the spindle pole. The protein localises to the microtubule organizing center. It is found in the centrosome. Its function is as follows. Essential component of the nuclear pore complex. The N-terminal is probably involved in nucleocytoplasmic transport. The C-terminal is involved in protein-protein interaction probably via coiled-coil formation, promotes its association with centrosomes and may function in anchorage of Nup62 to the pore complex. Binds to transcriptionally active genes. Negatively regulates chromatin attachment to the nuclear envelope, probably by preventing chromatin tethering by Nup154. The protein is Nuclear pore glycoprotein p62 of Drosophila melanogaster (Fruit fly).